A 332-amino-acid chain; its full sequence is L-lactate dehydrogenase A chain (332 aa).

At alanine 2 the chain carries N-acetylalanine. Position 5 is an N6-acetyllysine; alternate (lysine 5). Residue lysine 5 is modified to N6-succinyllysine; alternate. An N6-acetyllysine modification is found at lysine 14. 29-57 (GAVGMACAISILMKELADEIALVDVMEDK) serves as a coordination point for NAD(+). Position 57 is an N6-acetyllysine; alternate (lysine 57). Lysine 57 is covalently cross-linked (Glycyl lysine isopeptide (Lys-Gly) (interchain with G-Cter in SUMO2); alternate). Lysine 81 is subject to N6-acetyllysine. Arginine 99 is a binding site for NAD(+). Arginine 106 is a binding site for substrate. Lysine 118 is subject to N6-acetyllysine; alternate. Lysine 118 carries the N6-succinyllysine; alternate modification. N6-acetyllysine is present on lysine 126. Residue asparagine 138 coordinates NAD(+). 2 residues coordinate substrate: asparagine 138 and arginine 169. Histidine 193 serves as the catalytic Proton acceptor. N6-acetyllysine occurs at positions 224 and 232. Tyrosine 239 is modified (phosphotyrosine). Lysine 243 carries the N6-acetyllysine modification. Threonine 248 serves as a coordination point for substrate. At threonine 309 the chain carries Phosphothreonine. Position 318 is an N6-acetyllysine; alternate (lysine 318). Lysine 318 carries the post-translational modification N6-succinyllysine; alternate. Threonine 322 carries the phosphothreonine modification.

The protein belongs to the LDH/MDH superfamily. LDH family. As to quaternary structure, homotetramer. Interacts with PTEN upstream reading frame protein MP31. In terms of processing, ISGylated.

The protein resides in the cytoplasm. The enzyme catalyses (S)-lactate + NAD(+) = pyruvate + NADH + H(+). It functions in the pathway fermentation; pyruvate fermentation to lactate; (S)-lactate from pyruvate: step 1/1. Its function is as follows. Interconverts simultaneously and stereospecifically pyruvate and lactate with concomitant interconversion of NADH and NAD(+). This chain is L-lactate dehydrogenase A chain (LDHA), found in Sus scrofa (Pig).